The following is a 353-amino-acid chain: Quinolinate synthase (353 aa).

Positions 47 and 68 each coordinate iminosuccinate. A [4Fe-4S] cluster-binding site is contributed by cysteine 113. Iminosuccinate is bound by residues 139–141 (YAN) and serine 156. Residue cysteine 200 participates in [4Fe-4S] cluster binding. Residues 226–228 (HPE) and threonine 243 contribute to the iminosuccinate site. Residue cysteine 297 participates in [4Fe-4S] cluster binding.

Belongs to the quinolinate synthase family. Type 1 subfamily. It depends on [4Fe-4S] cluster as a cofactor.

The protein localises to the cytoplasm. The catalysed reaction is iminosuccinate + dihydroxyacetone phosphate = quinolinate + phosphate + 2 H2O + H(+). It participates in cofactor biosynthesis; NAD(+) biosynthesis; quinolinate from iminoaspartate: step 1/1. In terms of biological role, catalyzes the condensation of iminoaspartate with dihydroxyacetone phosphate to form quinolinate. This is Quinolinate synthase from Photobacterium profundum (strain SS9).